The primary structure comprises 379 residues: Origin of replication complex subunit 2 (379 aa).

Residues 1–25 (MALRGGHAAAAAGVSSGSEDDDEEA) form a disordered region. A compositionally biased stretch (low complexity) spans 8 to 17 (AAAAAGVSSG).

The protein belongs to the ORC2 family. In terms of assembly, component of the origin recognition complex (ORC) composed of at least ORC1, ORC2, ORC3, ORC4, ORC5 and ORC6. ORC is regulated in a cell-cycle and development dependent manner. It is sequentially assembled at the exit from anaphase of mitosis and disassembled as cells enter S phase.

Its subcellular location is the nucleus. Functionally, essential protein. Component of the origin recognition complex (ORC) that binds origins of replication. DNA-binding is ATP-dependent, however specific DNA sequences that define origins of replication have not been identified so far. ORC is required to assemble the pre-replication complex necessary to initiate DNA replication. This Oryza sativa subsp. indica (Rice) protein is Origin of replication complex subunit 2.